The primary structure comprises 149 residues: Transcriptional repressor NrdR (149 aa).

The segment at 3–34 is a zinc-finger region; it reads CPFCSHPETQVVETRVAEDGDFVRRRRQCGAC. An ATP-cone domain is found at 49 to 139; it reads PNVVKKDGRR…VYRNFEDIDE (91 aa).

The protein belongs to the NrdR family. It depends on Zn(2+) as a cofactor.

Functionally, negatively regulates transcription of bacterial ribonucleotide reductase nrd genes and operons by binding to NrdR-boxes. This Paracidovorax citrulli (strain AAC00-1) (Acidovorax citrulli) protein is Transcriptional repressor NrdR.